A 330-amino-acid polypeptide reads, in one-letter code: Ig gamma-2A chain C region, A allele (330 aa).

3 consecutive Ig-like domains span residues 6–98 (PSVY…KKIE), 121–220 (PSVF…RTIS), and 229–325 (PQVY…KSFS). 3 cysteine pairs are disulfide-bonded: cysteine 27-cysteine 82, cysteine 144-cysteine 204, and cysteine 250-cysteine 308. A glycan (N-linked (GlcNAc...) asparagine) is linked at asparagine 180.

The protein is Ig gamma-2A chain C region, A allele (Ighg) of Mus musculus (Mouse).